Reading from the N-terminus, the 455-residue chain is 2-oxoisovalerate dehydrogenase subunit alpha, mitochondrial (455 aa).

The transit peptide at Met-1–Phe-55 directs the protein to the mitochondrion. Residues Tyr-168 and Arg-169 each coordinate thiamine diphosphate. Ser-216 contacts K(+). Residue Ser-217 coordinates thiamine diphosphate. K(+) contacts are provided by Pro-218, Thr-221, and Gln-222. Position 248 (Glu-248) interacts with Mg(2+). The thiamine diphosphate site is built by Gly-249, Ala-250, and Arg-275. Mg(2+) is bound by residues Asn-277 and Tyr-279. His-346 contributes to the thiamine diphosphate binding site. Ser-347 carries the phosphoserine; by BCKDK modification. Position 348 is a phosphothreonine (Thr-348). Ser-349 and Ser-357 each carry phosphoserine. Lys-366 is subject to N6-acetyllysine; alternate. Lys-366 is modified (N6-succinyllysine; alternate). Lys-390 bears the N6-succinyllysine mark.

It belongs to the BCKDHA family. In terms of assembly, heterotetramer of 2 alpha/BCKDHA and 2 beta chains/BCKDHB that forms the branched-chain alpha-keto acid decarboxylase (E1) component of the BCKD complex. The branched-chain alpha-ketoacid dehydrogenase is a large complex composed of three major building blocks E1, E2 and E3. It is organized around E2, a 24-meric cubic core composed of DBT, to which are associated 6 to 12 copies of E1, and approximately 6 copies of the dehydrogenase E3, a DLD dimer. Interacts with PPM1K. Thiamine diphosphate is required as a cofactor. The cofactor is Mg(2+). Post-translationally, phosphorylated at Ser-347 by BCKDK and dephosphorylated by protein phosphatase PPM1K. In terms of tissue distribution, expressed in kidney (at protein level).

It localises to the mitochondrion matrix. The enzyme catalyses N(6)-[(R)-lipoyl]-L-lysyl-[protein] + 3-methyl-2-oxobutanoate + H(+) = N(6)-[(R)-S(8)-2-methylpropanoyldihydrolipoyl]-L-lysyl-[protein] + CO2. Functionally, together with BCKDHB forms the heterotetrameric E1 subunit of the mitochondrial branched-chain alpha-ketoacid dehydrogenase (BCKD) complex. The BCKD complex catalyzes the multi-step oxidative decarboxylation of alpha-ketoacids derived from the branched-chain amino-acids valine, leucine and isoleucine producing CO2 and acyl-CoA which is subsequently utilized to produce energy. The E1 subunit catalyzes the first step with the decarboxylation of the alpha-ketoacid forming an enzyme-product intermediate. A reductive acylation mediated by the lipoylamide cofactor of E2 extracts the acyl group from the E1 active site for the next step of the reaction. This Bos taurus (Bovine) protein is 2-oxoisovalerate dehydrogenase subunit alpha, mitochondrial (BCKDHA).